The chain runs to 227 residues: Ribosomal RNA small subunit methyltransferase G (227 aa).

S-adenosyl-L-methionine contacts are provided by residues Gly81, Leu86, 131–132 (AE), and Arg149.

The protein belongs to the methyltransferase superfamily. RNA methyltransferase RsmG family.

It localises to the cytoplasm. In terms of biological role, specifically methylates the N7 position of guanine in position 518 of 16S rRNA. The polypeptide is Ribosomal RNA small subunit methyltransferase G (Rhodococcus jostii (strain RHA1)).